The primary structure comprises 311 residues: Putative F-box protein At3g28280 (311 aa).

The F-box domain occupies 1-43; that stretch reads MNSLPEDLLAMILVKLPIKIFTTFKIVCTQWESMVDSPYFRDL.

The chain is Putative F-box protein At3g28280 from Arabidopsis thaliana (Mouse-ear cress).